We begin with the raw amino-acid sequence, 442 residues long: SPRY domain-containing protein 3 (442 aa).

The B30.2/SPRY domain maps to 17–204 (DLNLHYRFLN…VRLHLNAELG (188 aa)). The tract at residues 371–394 (EGEEEEEEEEEEEDGEEIEPEHEG) is disordered. The span at 372-390 (GEEEEEEEEEEEDGEEIEP) shows a compositional bias: acidic residues.

The chain is SPRY domain-containing protein 3 (SPRYD3) from Homo sapiens (Human).